The sequence spans 285 residues: Shikimate dehydrogenase (NADP(+)) (285 aa).

Shikimate-binding positions include 20–22 (SIS) and Ser67. Residue Lys71 is the Proton acceptor of the active site. Glu83 serves as a coordination point for NADP(+). 2 residues coordinate shikimate: Asn92 and Asp107. NADP(+)-binding positions include 129–133 (GAGGA) and Met227. Tyr229 contacts shikimate. Gly250 lines the NADP(+) pocket.

The protein belongs to the shikimate dehydrogenase family. In terms of assembly, homodimer.

It catalyses the reaction shikimate + NADP(+) = 3-dehydroshikimate + NADPH + H(+). Its pathway is metabolic intermediate biosynthesis; chorismate biosynthesis; chorismate from D-erythrose 4-phosphate and phosphoenolpyruvate: step 4/7. Involved in the biosynthesis of the chorismate, which leads to the biosynthesis of aromatic amino acids. Catalyzes the reversible NADPH linked reduction of 3-dehydroshikimate (DHSA) to yield shikimate (SA). The sequence is that of Shikimate dehydrogenase (NADP(+)) from Streptococcus gordonii (strain Challis / ATCC 35105 / BCRC 15272 / CH1 / DL1 / V288).